The sequence spans 71 residues: Large ribosomal subunit protein bL31 (71 aa).

Zn(2+)-binding residues include Cys-16, Cys-18, Cys-37, and Cys-40.

This sequence belongs to the bacterial ribosomal protein bL31 family. Type A subfamily. Part of the 50S ribosomal subunit. It depends on Zn(2+) as a cofactor.

In terms of biological role, binds the 23S rRNA. This chain is Large ribosomal subunit protein bL31, found in Pseudomonas aeruginosa (strain LESB58).